Reading from the N-terminus, the 193-residue chain is Cerebellin-1 (193 aa).

Positions 1 to 21 (MLGVLELLLLGAAWLAGPARG) are cleaved as a signal peptide. A glycan (N-linked (GlcNAc...) asparagine) is linked at N23. Positions 34–38 (CLVVC) are essential for interaction with NRXN1 and linker of two C1q trimers into disulfide-linked hexamers. The region spanning 57-193 (SGSAKVAFSA…TFSGFLVFPL (137 aa)) is the C1q domain. Residues 62–193 (VAFSAIRSTN…TFSGFLVFPL (132 aa)) form a necessary for interaction with CBLN3, and homotrimerization region. Residue N79 is glycosylated (N-linked (GlcNAc...) asparagine). Residues 122 to 147 (YNRQTIQVSLMLNGWPVISAFAGDQD) are essential for interaction with GRID2.

Homohexamer; disulfide-linked homotrimers. The trimers associate via N-terminal cysteine residues to form disulfide-linked hexamers. May form oligomers with CBLN2, CBLN3 AND CBLN4 prior to secretion. Once secreted, does not interact with other CBLN family members. Interacts with GRID1. Interacts with NRXN1 and NRXN2 long (alpha) and short (beta) isoforms produced by alternative promoter usage. Competes with NLGN1 for NRXN1-binding. Weakly interacts with NRXN3 short isoform and not at all with NRXN3 long isoform. Interacts (via C1q domain) with GRID2; GRID2-binding is calcium-independent; CBLN1 hexamers anchor GRID2 N-terminal domain dimers to monomeric NRXN1 isoform beta; promotes synaptogenesis and mediates the D-Serine-dependent long term depression signals and AMPA receptor endocytosis. Interacts with OTOL1. The proteolytic processing to yield cerebellin seems to occur either prior to the secretion by presynaptic neurons and subsequent oligomerization or in some other location after release of the mature protein. Post-translationally, sialoglycoprotein. In terms of tissue distribution, in the Purkinje cells postsynaptic structures. In the cerebellum, cerebellin is much less abundant than [des-Ser1]-cerebellin.

It is found in the secreted. It localises to the postsynaptic cell membrane. Required for synapse integrity and synaptic plasticity. During cerebellar synapse formation, essential for the matching and maintenance of pre- and post-synaptic elements at parallel fiber-Purkinje cell synapses, the establishment of the proper pattern of climbing fiber-Purkinje cell innervation, and induction of long-term depression at parallel fiber-Purkinje cell synapses. Plays a role as a synaptic organizer that acts bidirectionally on both pre- and post-synaptic components. On the one hand induces accumulation of synaptic vesicles in the pre-synaptic part by binding with NRXN1 and in other hand induces clustering of GRID2 and its associated proteins at the post-synaptic site through association of GRID2. NRXN1-CBLN1-GRID2 complex directly induces parallel fiber protrusions that encapsulate spines of Purkinje cells leading to accumulation of GRID2 and synaptic vesicles. Required for CBLN3 export from the endoplasmic reticulum and secretion. NRXN1-CBLN1-GRID2 complex mediates the D-Serine-dependent long term depression signals and AMPA receptor endocytosis. Essential for long-term maintenance but not establishment of excitatory synapses. Inhibits the formation and function of inhibitory GABAergic synapses in cerebellar Purkinje cells. Functionally, the cerebellin peptide exerts neuromodulatory functions. Directly stimulates norepinephrine release via the adenylate cyclase/PKA-dependent signaling pathway; and indirectly enhances adrenocortical secretion in vivo, through a paracrine mechanism involving medullary catecholamine release. The protein is Cerebellin-1 (CBLN1) of Homo sapiens (Human).